We begin with the raw amino-acid sequence, 469 residues long: MTRPVRTRFAPSPTGFIHLGNIRSALYPWAFARKMKGTFVLRIEDTDVERSSQEAVDAILDGMQWLGLDFDEGPIYQMQRMDRYREVIAQMLEKGLAYPCYMSAEELDALRERQREAGLKPRYDGTWRPEPGKVLPEPPAGVKPVLRFRNPLTGTVVWDDAVKGRVEISNEELDDLVIARPDGTPIYNFCVVVDDMDMGITHVIRGDDHVNNTPRQINILNALGGEPPVYAHLPTVLNEQGEKMSKRHGAMSVMAYRDAGFLPEAVVNYLARLGWSHGDAEIFSREQFVEWFDLEHLGKSPAQYDHSKLSWLNAHYIKEADNARLAELAKPFLAALGIDDAAIATGPALEAVVGLMKDRATTVKEIAEGATMFYRVPAPEADALAQHVTDVVRPALADLVAALKAADWTKEAVSAALKATLGTHKLKMPQLAMPVRLLVAGTTHTPSIDAVLVLFGRDVVVSRIEAALA.

Positions 11–21 (PSPTGFIHLGN) match the 'HIGH' region motif. Residues 243–247 (KMSKR) carry the 'KMSKS' region motif. ATP is bound at residue lysine 246.

This sequence belongs to the class-I aminoacyl-tRNA synthetase family. Glutamate--tRNA ligase type 1 subfamily. As to quaternary structure, monomer.

The protein localises to the cytoplasm. The catalysed reaction is tRNA(Glu) + L-glutamate + ATP = L-glutamyl-tRNA(Glu) + AMP + diphosphate. Catalyzes the attachment of glutamate to tRNA(Glu) in a two-step reaction: glutamate is first activated by ATP to form Glu-AMP and then transferred to the acceptor end of tRNA(Glu). The protein is Glutamate--tRNA ligase of Burkholderia lata (strain ATCC 17760 / DSM 23089 / LMG 22485 / NCIMB 9086 / R18194 / 383).